The chain runs to 347 residues: Nod factor export ATP-binding protein I (347 aa).

Residues 1–11 show a composition bias toward basic and acidic residues; the sequence is MGENMEREMLR. The segment at 1–32 is disordered; it reads MGENMEREMLRPKTIAMDQNSASARSNPEREI. Positions 17–26 are enriched in polar residues; sequence MDQNSASARS. The region spanning 49-279 is the ABC transporter domain; the sequence is IDLQAVTMIY…IIGCPVIEVY (231 aa). 81–88 contacts ATP; sequence GPNGAGKS.

Belongs to the ABC transporter superfamily. Lipooligosaccharide exporter (TC 3.A.1.102) family. As to quaternary structure, the complex is composed of two ATP-binding proteins (NodI) and two transmembrane proteins (NodJ).

Its subcellular location is the cell inner membrane. Functionally, part of the ABC transporter complex NodIJ involved in the export of the nodulation factors (Nod factors), the bacterial signal molecules that induce symbiosis and subsequent nodulation induction. Nod factors are LCO (lipo-chitin oligosaccharide), a modified beta-1,4-linked N-acetylglucosamine oligosaccharide. This subunit is responsible for energy coupling to the transport system. The sequence is that of Nod factor export ATP-binding protein I from Neorhizobium galegae (Rhizobium galegae).